The chain runs to 1257 residues: Period circadian protein homolog 2 (1257 aa).

The interval 1–60 (MNGYVDFSPSPTSPTKEPGAPQPTQAVLQEDVDMSSGSSGNENCSTGRDSQGSDCDDNGK) is disordered. A compositionally biased stretch (polar residues) spans 35 to 53 (SSGSSGNENCSTGRDSQGS). Residues 109 to 118 (LIRTLKELKV) carry the Nuclear export signal 1 motif. One can recognise a PAS 1 domain in the interval 179–246 (ITSEYIVKNA…FHSYTTPYKL (68 aa)). Residues 306 to 310 (LCCLL) carry the LXXLL motif. Residues 319–385 (YEAPRIPPEK…MLAIHKKILQ (67 aa)) enclose the PAS 2 domain. The PAC domain maps to 393-436 (YSPIRFRTRNGEYITLDTSWSSFINPWSRKISFIIGRHKVRVGP). Residues 460-469 (LTEQIHRLLM) carry the Nuclear export signal 2 motif. 2 disordered regions span residues 471-565 (PVPH…GASL) and 617-638 (PSRKATVSPGLHSGEAARPSKV). An important for protein stability region spans residues 478–482 (SGYGS). Polar residues predominate over residues 493-504 (MSQTSSSDSNGQ). The interval 510–709 (RRSGIFKTSG…GAAGGLSQEK (200 aa)) is CSNK1E binding domain. Ser525, Ser528, Ser531, Ser538, and Ser544 each carry phosphoserine. Thr554 carries the post-translational modification Phosphothreonine. Residues Ser659, Ser693, Ser697, Ser706, Ser758, and Ser763 each carry the phosphoserine modification. Positions 757–832 (RSRAQASDRG…SDTSQSSCPS (76 aa)) are disordered. The Nuclear localization signal motif lies at 778–794 (KKTGKNRKLKSKRVKTR). Residues 779–792 (KTGKNRKLKSKRVK) show a composition bias toward basic residues. The segment covering 821 to 832 (SPSDTSQSSCPS) has biased composition (low complexity). Thr858 is subject to Phosphothreonine. The interval 882–1067 (EFAVQPLPFA…DLCSATGSAL (186 aa)) is interaction with PPARG. At Ser939 the chain carries Phosphoserine. Thr964 is subject to Phosphothreonine. A Phosphoserine modification is found at Ser971. Positions 983–990 (LQLNLLQL) match the Nuclear export signal 3 motif. The disordered stretch occupies residues 994-1044 (PEGSTGAAGTLGTTGTAASGLDCTSGTSRDRQPKAPPTCNEPSDTQNSDAI). Residues 996–1014 (GSTGAAGTLGTTGTAASGL) are compositionally biased toward low complexity. Positions 1033-1044 (NEPSDTQNSDAI) are enriched in polar residues. The short motif at 1051-1055 (LNLLL) is the LXXLL element. Residues 1070 to 1092 (SGASATSDSLGSSSLGFGTSQSG) are compositionally biased toward low complexity. Positions 1070-1115 (SGASATSDSLGSSSLGFGTSQSGAGSSDTSHTSKYFGSIDSSENNH) are disordered. Residues 1093 to 1111 (AGSSDTSHTSKYFGSIDSS) show a composition bias toward polar residues. Ser1126 carries the post-translational modification Phosphoserine. Positions 1157-1257 (SRDLQAVLKE…LTGPRIEAQT (101 aa)) are CRY binding domain. The disordered stretch occupies residues 1224–1257 (PYEEDSPSPGLCDTSEAKEEEGEQLTGPRIEAQT).

Homodimer. Component of the circadian core oscillator, which includes the CRY proteins, CLOCK or NPAS2, BMAL1 or BMAL2, CSNK1D and/or CSNK1E, TIMELESS, and the PER proteins. Interacts with CLOCK-BMAL1 (off DNA). Interacts with BMAL2. Interacts directly with PER1 and PER3, and through a C-terminal domain, with CRY1 and CRY2. Interacts (via PAS 2 domain) with TIMELESS. Interacts with NFIL3. Different large complexes have been identified with different repressive functions. The core of PER complexes is composed of at least PER1, PER2, PER3, CRY1, CRY2, CSNK1D and/or CSNK1E. The large PER complex involved in the repression of transcriptional termination is composed of at least PER2, CDK9, DDX5, DHX9, NCBP1 and POLR2A (active). The large PER complex involved in the histone deacetylation is composed of at least HDAC1, PER2, SFPQ and SIN3A. The large PER complex involved in the histone methylation is composed of at least PER2, CBX3, TRIM28, SUV39H1 and/or SUV39H2; CBX3 mediates the formation of the complex. Interacts with SETX; the interaction inhibits termination of circadian target genes. Interacts with the nuclear receptors HNF4A, NR1D1, NR4A2, RORA, PPARA, PPARG and THRA; the interaction with at least PPARG is ligand dependent. Interacts with PML. Interacts (phosphorylated) with BTRC and FBXW11; the interactions trigger proteasomal degradation. Interacts with NONO and SFPQ. Interacts with CAVIN3. Interacts with MAGEL2. Interacts with MAP1LC3B. Interacts with HNF4A. In terms of processing, acetylated. Deacetylated by SIRT1, resulting in decreased protein stability. Deacetylated by SIRT6, preventing its degradation by the proteasome, resulting in increased protein stability. Phosphorylated by CSNK1E and CSNK1D. Phosphorylation results in PER2 protein degradation. May be dephosphorylated by PP1. Post-translationally, ubiquitinated, leading to its proteasomal degradation. Ubiquitination may be inhibited by CRY1. In terms of tissue distribution, in the brain, high expression in SCN during the subjective day. Constitutive expression in the cornu ammonis and in the dentate gyrus of the hippocampus. Also expressed in the piriform cortex and the glomeruli of the olfactory bulb, and at a lower extent in the cerebral cortex. Not expressed in the pars tuberalis and the Purkinje neurons. Also expressed in adipose tissue (white and brown), heart, kidney, bladder, lumbar spinal cord, skeletal muscle, spleen, lung, pancreas and liver with highest levels in skeletal muscle and liver and lowest levels in spleen.

The protein resides in the nucleus. Its subcellular location is the cytoplasm. The protein localises to the perinuclear region. Its function is as follows. Transcriptional repressor which forms a core component of the circadian clock. The circadian clock, an internal time-keeping system, regulates various physiological processes through the generation of approximately 24 hour circadian rhythms in gene expression, which are translated into rhythms in metabolism and behavior. It is derived from the Latin roots 'circa' (about) and 'diem' (day) and acts as an important regulator of a wide array of physiological functions including metabolism, sleep, body temperature, blood pressure, endocrine, immune, cardiovascular, and renal function. Consists of two major components: the central clock, residing in the suprachiasmatic nucleus (SCN) of the brain, and the peripheral clocks that are present in nearly every tissue and organ system. Both the central and peripheral clocks can be reset by environmental cues, also known as Zeitgebers (German for 'timegivers'). The predominant Zeitgeber for the central clock is light, which is sensed by retina and signals directly to the SCN. The central clock entrains the peripheral clocks through neuronal and hormonal signals, body temperature and feeding-related cues, aligning all clocks with the external light/dark cycle. Circadian rhythms allow an organism to achieve temporal homeostasis with its environment at the molecular level by regulating gene expression to create a peak of protein expression once every 24 hours to control when a particular physiological process is most active with respect to the solar day. Transcription and translation of core clock components (CLOCK, NPAS2, BMAL1, BMAL2, PER1, PER2, PER3, CRY1 and CRY2) plays a critical role in rhythm generation, whereas delays imposed by post-translational modifications (PTMs) are important for determining the period (tau) of the rhythms (tau refers to the period of a rhythm and is the length, in time, of one complete cycle). A diurnal rhythm is synchronized with the day/night cycle, while the ultradian and infradian rhythms have a period shorter and longer than 24 hours, respectively. Disruptions in the circadian rhythms contribute to the pathology of cardiovascular diseases, cancer, metabolic syndrome and aging. A transcription/translation feedback loop (TTFL) forms the core of the molecular circadian clock mechanism. Transcription factors, CLOCK or NPAS2 and BMAL1 or BMAL2, form the positive limb of the feedback loop, act in the form of a heterodimer and activate the transcription of core clock genes and clock-controlled genes (involved in key metabolic processes), harboring E-box elements (5'-CACGTG-3') within their promoters. The core clock genes: PER1/2/3 and CRY1/2 which are transcriptional repressors form the negative limb of the feedback loop and interact with the CLOCK|NPAS2-BMAL1|BMAL2 heterodimer inhibiting its activity and thereby negatively regulating their own expression. This heterodimer also activates nuclear receptors NR1D1/2 and RORA/B/G, which form a second feedback loop and which activate and repress BMAL1 transcription, respectively. PER1 and PER2 proteins transport CRY1 and CRY2 into the nucleus with appropriate circadian timing, but also contribute directly to repression of clock-controlled target genes through interaction with several classes of RNA-binding proteins, helicases and others transcriptional repressors. PER appears to regulate circadian control of transcription by at least three different modes. First, interacts directly with the CLOCK-BMAL1 at the tail end of the nascent transcript peak to recruit complexes containing the SIN3-HDAC that remodel chromatin to repress transcription. Second, brings H3K9 methyltransferases such as SUV39H1 and SUV39H2 to the E-box elements of the circadian target genes, like PER2 itself or PER1. The recruitment of each repressive modifier to the DNA seems to be very precisely temporally orchestrated by the large PER complex, the deacetylases acting before than the methyltransferases. Additionally, large PER complexes are also recruited to the target genes 3' termination site through interactions with RNA-binding proteins and helicases that may play a role in transcription termination to regulate transcription independently of CLOCK-BMAL1 interactions. Recruitment of large PER complexes to the elongating polymerase at PER and CRY termination sites inhibited SETX action, impeding RNA polymerase II release and thereby repressing transcriptional reinitiation. May propagate clock information to metabolic pathways via the interaction with nuclear receptors. Coactivator of PPARA and corepressor of NR1D1, binds rhythmically at the promoter of nuclear receptors target genes like BMAL1 or G6PC1. Directly and specifically represses PPARG proadipogenic activity by blocking PPARG recruitment to target promoters and thereby transcriptional activation. Required for fatty acid and lipid metabolism, is involved as well in the regulation of circulating insulin levels. Plays an important role in the maintenance of cardiovascular functions through the regulation of NO and vasodilatatory prostaglandins production in aortas. Controls circadian glutamate uptake in synaptic vesicles through the regulation of VGLUT1 expression. May also be involved in the regulation of inflammatory processes. Represses the CLOCK-BMAL1 induced transcription of BHLHE40/DEC1 and ATF4. Negatively regulates the formation of the TIMELESS-CRY1 complex by competing with TIMELESS for binding to CRY1. In Mus musculus (Mouse), this protein is Period circadian protein homolog 2 (Per2).